The primary structure comprises 469 residues: MSHPSGLRSSVSSTSYRRTFGPPPSLSPGAFSYSSSSRFSSSRLLGSASPGSSVRLGSFRGPRAGTGALLRLPSERLDFSMAEALNQEFLATRSNEKQELQELNDRFANFIEKVRFLEQQNAALRGELNQARGQEPARADQLCQQELRELRRELELLGRERDRVQVERDGLAEDLAALKQRLEEETRKREDAEHNLVLFRKDVDDATLSRLELERKIESLMDEIEFLKKLHEEELRDLQLSVESQQVQHVEVEATVKPELTAALRDIRAQYESIAAKNLQEAEEWYKSKYADLSDAANRNHEALRQAKQEMNESRRQIQSLTCEVDGLRGTNEALLRQLRELEEQFALEAGGYQAGAARLEEELRQLKEEMARHLREYQELLNVKMALDIEIATYRKLLEGEESRISVPVHSFASLSIKTTVPEVEPPQETHSRKMVLIRTIETRDGEQVVTESQKEQHSELDKSPQSY.

Low complexity-rich tracts occupy residues 1-18 and 27-53; these read MSHP…SYRR and SPGA…PGSS. The segment at 1-60 is disordered; that stretch reads MSHPSGLRSSVSSTSYRRTFGPPPSLSPGAFSYSSSSRFSSSRLLGSASPGSSVRLGSFR. Positions 1–98 are head; the sequence is MSHPSGLRSS…FLATRSNEKQ (98 aa). The residue at position 16 (tyrosine 16) is a 3'-nitrotyrosine. Residues serine 27, serine 49, and serine 58 each carry the phosphoserine modification. An IF rod domain is found at 96 to 406; that stretch reads EKQELQELND…KLLEGEESRI (311 aa). The segment at 99-131 is coil 1A; it reads ELQELNDRFANFIEKVRFLEQQNAALRGELNQA. Positions 132–142 are linker 1; sequence RGQEPARADQL. A coil 1B region spans residues 143–238; the sequence is CQQELRELRR…KLHEEELRDL (96 aa). The tract at residues 239–261 is linker 2; that stretch reads QLSVESQQVQHVEVEATVKPELT. The tract at residues 262–404 is coil 2; it reads AALRDIRAQY…YRKLLEGEES (143 aa). A 3'-nitrotyrosine modification is found at tyrosine 378. A tail region spans residues 405 to 469; it reads RISVPVHSFA…SELDKSPQSY (65 aa). The interval 447-469 is disordered; the sequence is GEQVVTESQKEQHSELDKSPQSY. Position 469 is a phosphotyrosine (tyrosine 469).

This sequence belongs to the intermediate filament family. As to quaternary structure, forms homodimers (in vitro). Homopolymerizes into a filamentous network (in vitro). Forms heterodimers with NEFL, NEFM or NEFH (in vitro). Interacts with DST (via C-terminus). Interacts with RAB7A; the interaction is direct. Interacts with PRKCE (via phorbol-ester/DAG-type 2 domain). In terms of processing, phosphorylated; phosphorylation increases after nerve injury in regenerating neurons.

The protein resides in the cytoplasm. The protein localises to the cytoskeleton. It localises to the cell projection. It is found in the axon. Its subcellular location is the perikaryon. Class-III neuronal intermediate filament protein. May form an independent structural network without the involvement of other neurofilaments or may cooperate with the neuronal intermediate filament proteins NEFL, NEFH, NEFM and INA to form a filamentous network. Assembly of the neuronal intermediate filaments may be regulated by RAB7A. Plays a role in the development of unmyelinated sensory neurons. May be involved in axon elongation and axon regeneration after injury. Inhibits neurite extension in type II spiral ganglion neurons in the cochlea. The polypeptide is Peripherin (PRPH) (Bos taurus (Bovine)).